Here is a 256-residue protein sequence, read N- to C-terminus: Small ribosomal subunit protein uS2 (256 aa).

It belongs to the universal ribosomal protein uS2 family.

The protein is Small ribosomal subunit protein uS2 of Acidiphilium cryptum (strain JF-5).